The chain runs to 151 residues: Small ribosomal subunit protein uS19 (151 aa).

The segment at 1–23 is disordered; it reads MVVNKQGSVKSIKRKARKSRKVT. The span at 11–23 shows a compositional bias: basic residues; that stretch reads SIKRKARKSRKVT.

It belongs to the universal ribosomal protein uS19 family.

Its function is as follows. Protein S19 forms a complex with S13 that binds strongly to the 16S ribosomal RNA. In Thermoplasma volcanium (strain ATCC 51530 / DSM 4299 / JCM 9571 / NBRC 15438 / GSS1), this protein is Small ribosomal subunit protein uS19 (rps19).